The primary structure comprises 483 residues: Serine/threonine-protein phosphatase 2A regulatory subunit phr2AB (483 aa).

2 WD repeats span residues 22–61 (SDAN…QSSK) and 88–129 (EIEE…IKQV). Residues 132 to 152 (SATTTGPSYNGSLASNNTRSP) form a disordered region. WD repeat units lie at residues 206 to 244 (AHAY…ECFN), 255 to 295 (DLTE…LCDN), 314 to 352 (EIIS…KPVK), and 369 to 410 (ENDC…DVCL). Positions 421–443 (TKTLTTKMKLRSSKKEPKKPEDI) are disordered. Residues 433 to 443 (SKKEPKKPEDI) show a composition bias toward basic and acidic residues. A WD 7 repeat occupies 449–483 (EYTKKTLHCAWHPKDNLIAVGAANTVYLYAATENK).

The protein belongs to the phosphatase 2A regulatory subunit B family. As to quaternary structure, PP2A consists of a trimeric holoenzyme, composed of a 37 kDa catalytic subunit (C subunit) and a 65 kDa constant regulatory subunit (A subunit), that associates with a variety of regulatory subunits (B subunit) such as phr2AB (B55) and psrA (B56 homolog). The trimer may partially dissociates into a core 'AC' dimer equally active compared to the trimer.

The protein localises to the cytoplasm. It is found in the cytosol. It localises to the cytoskeleton. The protein resides in the microtubule organizing center. Its subcellular location is the centrosome. Functionally, the B regulatory subunit might modulate substrate selectivity and catalytic activity, and might also direct the localization of the catalytic enzyme to a particular subcellular compartment. This is Serine/threonine-protein phosphatase 2A regulatory subunit phr2AB (phr2aB) from Dictyostelium discoideum (Social amoeba).